A 268-amino-acid chain; its full sequence is NH(3)-dependent NAD(+) synthetase (268 aa).

Glycine 45–serine 52 is a binding site for ATP. Aspartate 51 provides a ligand contact to Mg(2+). Arginine 129 contributes to the deamido-NAD(+) binding site. Threonine 149 is an ATP binding site. Glutamate 154 contributes to the Mg(2+) binding site. Deamido-NAD(+) is bound by residues lysine 162 and aspartate 169. Positions 178 and 200 each coordinate ATP. Histidine 260–lysine 261 serves as a coordination point for deamido-NAD(+).

It belongs to the NAD synthetase family. In terms of assembly, homodimer.

The enzyme catalyses deamido-NAD(+) + NH4(+) + ATP = AMP + diphosphate + NAD(+) + H(+). It participates in cofactor biosynthesis; NAD(+) biosynthesis; NAD(+) from deamido-NAD(+) (ammonia route): step 1/1. Functionally, catalyzes the ATP-dependent amidation of deamido-NAD to form NAD. Uses ammonia as a nitrogen source. This is NH(3)-dependent NAD(+) synthetase from Halobacterium salinarum (strain ATCC 29341 / DSM 671 / R1).